Here is a 301-residue protein sequence, read N- to C-terminus: Mitochondrial substrate carrier family protein X (301 aa).

The Mitochondrial intermembrane segment spans residues 1–23 (MVQQQQQQQQIKKNQVKPPLYSN). 3 Solcar repeats span residues 18-109 (PPLY…FRTR), 117-199 (IKLW…MKHN), and 208-296 (IGLP…QKSF). Residues 24–44 (LIAGAIAGVIGSSVVFPLDFV) traverse the membrane as a helical segment. The Mitochondrial matrix portion of the chain corresponds to 45-75 (KTRLQQQRVSIDGSKQYNGIIDCFKKVIKNE). Residues 76 to 97 (GGVRGLYRGLSSNLIGIIPEKA) traverse the membrane as a helical segment. Residues 98 to 122 (LKLAMNDYFRTRFQGDRSYIKLWEE) lie on the Mitochondrial intermembrane side of the membrane. The helical transmembrane segment at 123–143 (VASGGLAGMCQVVATNPMELV) threads the bilayer. Topologically, residues 144-173 (KIRMQVSGLSGKKASLKEVVSELGIKGLYK) are mitochondrial matrix. The chain crosses the membrane as a helical span at residues 174–194 (GTASTLLRDVPFSMIYFSIYG). The Mitochondrial intermembrane segment spans residues 195 to 207 (RMKHNLTDQETGE). The chain crosses the membrane as a helical span at residues 208–228 (IGLPKILLCGITAGSIAASVS). The Mitochondrial matrix portion of the chain corresponds to 229 to 271 (TPFDVIKTRIQVKPGPNDPHYKGIADCFRKTIQSEGPKALFKG). The chain crosses the membrane as a helical span at residues 272–292 (VLPRVCIISPLFGITLVVYEI). Topologically, residues 293–301 (QKSFYASTH) are mitochondrial intermembrane.

It belongs to the mitochondrial carrier (TC 2.A.29) family.

It is found in the mitochondrion inner membrane. Mitochondrial solute carriers shuttle metabolites, nucleotides, and cofactors through the mitochondrial inner membrane. The sequence is that of Mitochondrial substrate carrier family protein X (mcfX) from Dictyostelium discoideum (Social amoeba).